A 105-amino-acid polypeptide reads, in one-letter code: Cell division protein FtsB (105 aa).

The Cytoplasmic portion of the chain corresponds to 1–3 (MKP). A helical transmembrane segment spans residues 4-21 (FVLVLFALLALLQYRLWF). Over 22 to 105 (GENSLTEYFT…RSSEQSQDNQ (84 aa)) the chain is Periplasmic. A coiled-coil region spans residues 38–75 (HQQSGNAELLERNEVLKEEIQDLKSGTEALEERARNEL).

The protein belongs to the FtsB family. As to quaternary structure, part of a complex composed of FtsB, FtsL and FtsQ.

The protein localises to the cell inner membrane. Its function is as follows. Essential cell division protein. May link together the upstream cell division proteins, which are predominantly cytoplasmic, with the downstream cell division proteins, which are predominantly periplasmic. The protein is Cell division protein FtsB of Shewanella amazonensis (strain ATCC BAA-1098 / SB2B).